The primary structure comprises 152 residues: Urease accessory protein UreE (152 aa).

It belongs to the UreE family.

The protein localises to the cytoplasm. In terms of biological role, involved in urease metallocenter assembly. Binds nickel. Probably functions as a nickel donor during metallocenter assembly. This Enterobacter sp. (strain 638) protein is Urease accessory protein UreE.